Here is a 143-residue protein sequence, read N- to C-terminus: MEPESILDFHTEQEEILAARARSVSRENQISLAIVLVGSEDRREIKEGIEILEDVVSDTAHSEDSRVCVHYLALAHARLKNYDKSINLLNALLRTEPSNMQATELRRAVEKKMKREGLLGLGLLGGAVAVVGGLVIAGLAFRK.

A helical membrane pass occupies residues 121–141; the sequence is LGLLGGAVAVVGGLVIAGLAF.

This sequence belongs to the FIS1 family.

It localises to the mitochondrion outer membrane. The protein localises to the peroxisome membrane. Functionally, involved in the fragmentation of the mitochondrial network. Involved in perinuclear clustering of the mitochondrial network. Plays a role in removal of ultraviolet C radiation-induced mitochondrial DNA damage. May act, redundantly with fis-2, downstream of mitochondrial fission, before the fission products participate in either mitochondrial homeostasis, mitophagy, or apoptosis. The sequence is that of FIS1-related protein fis-1 from Caenorhabditis elegans.